A 686-amino-acid polypeptide reads, in one-letter code: Rhophilin-2 (686 aa).

An REM-1 domain is found at 26–100 (NPLAQTGRSK…LEGLNISVGV (75 aa)). The tract at residues 46–66 (QILKAVRMRTGAENLLKVATN) is interaction with Rho. One can recognise a BRO1 domain in the interval 111-460 (PLIPLGLKET…RLKYAQHQDD (350 aa)). The PDZ domain maps to 515–593 (RSIHFTAEEG…DGVEMKVVSL (79 aa)). Residue Thr-655 is modified to Phosphothreonine.

It belongs to the RHPN family. Interacts with GTP-bound RhoA and RhoB. Interacts with both GTP- and GDP-bound RhoA. Interacts with KRT18. As to expression, mainly expressed in thyroid.

Its subcellular location is the cytoplasm. The protein resides in the perinuclear region. Binds specifically to GTP-Rho. May function in a Rho pathway to limit stress fiber formation and/or increase the turnover of F-actin structures in the absence of high levels of RhoA activity. This Canis lupus familiaris (Dog) protein is Rhophilin-2 (RHPN2).